The following is a 124-amino-acid chain: Late histone H2B.2.1 (124 aa).

The disordered stretch occupies residues 1-32 (MPAKQTSGKGAKKAGKAKGRPAGASKTRRRKR). Positions 10–19 (GAKKAGKAKG) are enriched in basic residues. S111 is a glycosylation site (O-linked (GlcNAc) serine). K119 is covalently cross-linked (Glycyl lysine isopeptide (Lys-Gly) (interchain with G-Cter in ubiquitin)).

The protein belongs to the histone H2B family. In terms of assembly, the nucleosome is a histone octamer containing two molecules each of H2A, H2B, H3 and H4 assembled in one H3-H4 heterotetramer and two H2A-H2B heterodimers. The octamer wraps approximately 147 bp of DNA. In terms of processing, monoubiquitination of Lys-119 gives a specific tag for epigenetic transcriptional activation and is also prerequisite for histone H3 'Lys-4' and 'Lys-79' methylation. GlcNAcylation at Ser-111 promotes monoubiquitination of Lys-119. It fluctuates in response to extracellular glucose, and associates with transcribed genes.

Its subcellular location is the nucleus. The protein localises to the chromosome. Core component of nucleosome. Nucleosomes wrap and compact DNA into chromatin, limiting DNA accessibility to the cellular machineries which require DNA as a template. Histones thereby play a central role in transcription regulation, DNA repair, DNA replication and chromosomal stability. DNA accessibility is regulated via a complex set of post-translational modifications of histones, also called histone code, and nucleosome remodeling. The polypeptide is Late histone H2B.2.1 (Psammechinus miliaris (Green sea urchin)).